A 288-amino-acid polypeptide reads, in one-letter code: 4-diphosphocytidyl-2-C-methyl-D-erythritol kinase (288 aa).

Lys11 is an active-site residue. Pro93–Ser103 provides a ligand contact to ATP. Asp135 is an active-site residue.

This sequence belongs to the GHMP kinase family. IspE subfamily.

It catalyses the reaction 4-CDP-2-C-methyl-D-erythritol + ATP = 4-CDP-2-C-methyl-D-erythritol 2-phosphate + ADP + H(+). It participates in isoprenoid biosynthesis; isopentenyl diphosphate biosynthesis via DXP pathway; isopentenyl diphosphate from 1-deoxy-D-xylulose 5-phosphate: step 3/6. In terms of biological role, catalyzes the phosphorylation of the position 2 hydroxy group of 4-diphosphocytidyl-2C-methyl-D-erythritol. The chain is 4-diphosphocytidyl-2-C-methyl-D-erythritol kinase from Chlorobium limicola (strain DSM 245 / NBRC 103803 / 6330).